The primary structure comprises 62 residues: Large ribosomal subunit protein bL28 (62 aa).

The disordered stretch occupies residues 1–27; the sequence is MAKECVITGRKSRSGNKRSHAMNSSKR. Basic residues predominate over residues 10–20; that stretch reads RKSRSGNKRSH.

It belongs to the bacterial ribosomal protein bL28 family.

The protein is Large ribosomal subunit protein bL28 of Listeria innocua serovar 6a (strain ATCC BAA-680 / CLIP 11262).